Here is a 119-residue protein sequence, read N- to C-terminus: Autophagy-related protein 8C-like (119 aa).

The Phosphatidylethanolamine amidated glycine moiety is linked to residue Gly-117. Residues 118–119 (SF) constitute a propeptide, removed in mature form.

Belongs to the ATG8 family. Interacts with ATG4. Interacts with the Phytophtora infestans effector PexRD54. Interacts with JOKA2. In terms of processing, the C-terminal 2 residues are removed by ATG4 to expose Gly-117 at the C-terminus. The C-terminal Gly is then amidated with phosphatidylethanolamine by an activating system similar to that for ubiquitin. The phosphatidylethanolamine amidated glycine is required for autophagosome formation.

The protein resides in the cytoplasmic vesicle. It is found in the autophagosome membrane. It localises to the vacuole membrane. The protein localises to the cytoplasm. Its subcellular location is the cytoskeleton. Its function is as follows. Ubiquitin-like modifier involved in autophagosomes formation. May mediate the delivery of the autophagosomes to the vacuole via the microtubule cytoskeleton. ATG8CL-mediated selective autophagy contributes to defense against the fungal pathogen Phytophtora infestans. The sequence is that of Autophagy-related protein 8C-like from Solanum tuberosum (Potato).